The following is an 84-amino-acid chain: Putative membrane protein insertion efficiency factor (84 aa).

Belongs to the UPF0161 family.

The protein resides in the cell inner membrane. Functionally, could be involved in insertion of integral membrane proteins into the membrane. This is Putative membrane protein insertion efficiency factor from Acidiphilium cryptum (strain JF-5).